The chain runs to 99 residues: Small integral membrane protein 14 (99 aa).

The Lumenal segment spans residues 1–49 (MAEGGFDPCECVCSHEHAMRRLINLLRQSQSYCTDTECLRELPGPSSDS). A helical transmembrane segment spans residues 50–70 (GISITVILMAWMVIAMLLFLL). Residues 71–99 (RPPNLRGSSLPGKPSSPHSGQDPPAPPVD) lie on the Cytoplasmic side of the membrane. The disordered stretch occupies residues 77–99 (GSSLPGKPSSPHSGQDPPAPPVD).

Ubiquitously expressed.

Its subcellular location is the endoplasmic reticulum membrane. This is Small integral membrane protein 14 (Smim14) from Mus musculus (Mouse).